Reading from the N-terminus, the 451-residue chain is Bifunctional protein GlmU (451 aa).

The interval 1-230 (MNNPIAAIVL…PADVGGINSR (230 aa)) is pyrophosphorylase. Residues 10 to 13 (LAAG), Lys24, Gln74, 79 to 80 (GT), 102 to 104 (YGD), Gly142, Glu156, Asn171, and Asn228 each bind UDP-N-acetyl-alpha-D-glucosamine. Asp104 lines the Mg(2+) pocket. Asn228 serves as a coordination point for Mg(2+). The interval 231 to 251 (AELAAAEAQWQAFRREEAMAA) is linker. The N-acetyltransferase stretch occupies residues 252–451 (GASLRAPETV…RKKKAAEQKK (200 aa)). UDP-N-acetyl-alpha-D-glucosamine is bound by residues Arg317 and Lys335. The active-site Proton acceptor is His347. UDP-N-acetyl-alpha-D-glucosamine is bound by residues Tyr350 and Asn361. Acetyl-CoA contacts are provided by residues Ala364, 370-371 (NY), Ser389, Ala407, and Arg424.

It in the N-terminal section; belongs to the N-acetylglucosamine-1-phosphate uridyltransferase family. The protein in the C-terminal section; belongs to the transferase hexapeptide repeat family. Homotrimer. Mg(2+) is required as a cofactor.

It localises to the cytoplasm. It catalyses the reaction alpha-D-glucosamine 1-phosphate + acetyl-CoA = N-acetyl-alpha-D-glucosamine 1-phosphate + CoA + H(+). The enzyme catalyses N-acetyl-alpha-D-glucosamine 1-phosphate + UTP + H(+) = UDP-N-acetyl-alpha-D-glucosamine + diphosphate. The protein operates within nucleotide-sugar biosynthesis; UDP-N-acetyl-alpha-D-glucosamine biosynthesis; N-acetyl-alpha-D-glucosamine 1-phosphate from alpha-D-glucosamine 6-phosphate (route II): step 2/2. Its pathway is nucleotide-sugar biosynthesis; UDP-N-acetyl-alpha-D-glucosamine biosynthesis; UDP-N-acetyl-alpha-D-glucosamine from N-acetyl-alpha-D-glucosamine 1-phosphate: step 1/1. It participates in bacterial outer membrane biogenesis; LPS lipid A biosynthesis. Functionally, catalyzes the last two sequential reactions in the de novo biosynthetic pathway for UDP-N-acetylglucosamine (UDP-GlcNAc). The C-terminal domain catalyzes the transfer of acetyl group from acetyl coenzyme A to glucosamine-1-phosphate (GlcN-1-P) to produce N-acetylglucosamine-1-phosphate (GlcNAc-1-P), which is converted into UDP-GlcNAc by the transfer of uridine 5-monophosphate (from uridine 5-triphosphate), a reaction catalyzed by the N-terminal domain. This is Bifunctional protein GlmU from Sphingopyxis alaskensis (strain DSM 13593 / LMG 18877 / RB2256) (Sphingomonas alaskensis).